Reading from the N-terminus, the 202-residue chain is Large ribosomal subunit protein uL4 (202 aa).

The segment at 45 to 71 (HAQKNRSEVSGSGKKPWRQKGTGRARV) is disordered.

It belongs to the universal ribosomal protein uL4 family. In terms of assembly, part of the 50S ribosomal subunit.

In terms of biological role, one of the primary rRNA binding proteins, this protein initially binds near the 5'-end of the 23S rRNA. It is important during the early stages of 50S assembly. It makes multiple contacts with different domains of the 23S rRNA in the assembled 50S subunit and ribosome. Functionally, forms part of the polypeptide exit tunnel. The chain is Large ribosomal subunit protein uL4 from Buchnera aphidicola subsp. Baizongia pistaciae (strain Bp).